The primary structure comprises 140 residues: Nucleoside triphosphatase NudI (140 aa).

The region spanning 1 to 140 (MRHRTIVCPL…RVTLSLKGLL (140 aa)) is the Nudix hydrolase domain. The Nudix box signature appears at 38 to 58 (GVEPGERIEEALRREIREELG).

Belongs to the Nudix hydrolase family. NudI subfamily. In terms of assembly, monomer. Mg(2+) serves as cofactor.

It catalyses the reaction a ribonucleoside 5'-triphosphate + H2O = a ribonucleoside 5'-phosphate + diphosphate + H(+). It carries out the reaction a 2'-deoxyribonucleoside 5'-triphosphate + H2O = a 2'-deoxyribonucleoside 5'-phosphate + diphosphate + H(+). The catalysed reaction is dUTP + H2O = dUMP + diphosphate + H(+). The enzyme catalyses dTTP + H2O = dTMP + diphosphate + H(+). It catalyses the reaction dCTP + H2O = dCMP + diphosphate + H(+). Functionally, catalyzes the hydrolysis of nucleoside triphosphates, with a preference for pyrimidine deoxynucleoside triphosphates (dUTP, dTTP and dCTP). This Klebsiella pneumoniae subsp. pneumoniae (strain ATCC 700721 / MGH 78578) protein is Nucleoside triphosphatase NudI.